The primary structure comprises 132 residues: Large ribosomal subunit protein bL17 (132 aa).

This sequence belongs to the bacterial ribosomal protein bL17 family. In terms of assembly, part of the 50S ribosomal subunit. Contacts protein L32.

This chain is Large ribosomal subunit protein bL17, found in Ruthia magnifica subsp. Calyptogena magnifica.